We begin with the raw amino-acid sequence, 314 residues long: 4-diphosphocytidyl-2-C-methyl-D-erythritol kinase (314 aa).

Residue lysine 11 is part of the active site. 95 to 105 (PIGAGLAGGST) is a binding site for ATP. Aspartate 137 is a catalytic residue.

It belongs to the GHMP kinase family. IspE subfamily.

It carries out the reaction 4-CDP-2-C-methyl-D-erythritol + ATP = 4-CDP-2-C-methyl-D-erythritol 2-phosphate + ADP + H(+). Its pathway is isoprenoid biosynthesis; isopentenyl diphosphate biosynthesis via DXP pathway; isopentenyl diphosphate from 1-deoxy-D-xylulose 5-phosphate: step 3/6. Catalyzes the phosphorylation of the position 2 hydroxy group of 4-diphosphocytidyl-2C-methyl-D-erythritol. The chain is 4-diphosphocytidyl-2-C-methyl-D-erythritol kinase from Synechococcus elongatus (strain ATCC 33912 / PCC 7942 / FACHB-805) (Anacystis nidulans R2).